The sequence spans 307 residues: Elongation factor Ts (307 aa).

The involved in Mg(2+) ion dislocation from EF-Tu stretch occupies residues 80–83 (TDFV).

The protein belongs to the EF-Ts family.

The protein resides in the cytoplasm. Functionally, associates with the EF-Tu.GDP complex and induces the exchange of GDP to GTP. It remains bound to the aminoacyl-tRNA.EF-Tu.GTP complex up to the GTP hydrolysis stage on the ribosome. The polypeptide is Elongation factor Ts (Methylobacterium nodulans (strain LMG 21967 / CNCM I-2342 / ORS 2060)).